An 899-amino-acid polypeptide reads, in one-letter code: Lipoxygenase 2, chloroplastic (899 aa).

A chloroplast-targeting transit peptide spans 1 to 57 (MLKPQIHKPHLVNKLPLGTPFIPSHASIASFSTTSLRTLSVQKCYRRYIRYTSSNIK). In terms of domain architecture, PLAT spans 83–203 (ALTAVTVGLL…DNPDKRIFFL (121 aa)). A Lipoxygenase domain is found at 206–899 (SYLPSETPEG…GKGVPYSISI (694 aa)). The tract at residues 252–286 (DPDTDSDMARPVLGGNEHPFPRRCRTGRKMTSTEP) is disordered. Residues His-557, His-562, His-749, Asn-753, and Ile-899 each contribute to the Fe cation site.

It belongs to the lipoxygenase family. Fe cation is required as a cofactor. In terms of tissue distribution, confined to glandular trichomes in flowers.

Its subcellular location is the plastid. It localises to the chloroplast. The protein operates within lipid metabolism; oxylipin biosynthesis. Its function is as follows. Plant lipoxygenases may be involved in a number of diverse aspects of plant physiology including growth and development, pest resistance, and senescence or responses to wounding. Catalyzes the hydroperoxidation of lipids containing a cis,cis-1,4-pentadiene structure. This is Lipoxygenase 2, chloroplastic from Tanacetum cinerariifolium (Dalmatian daisy).